The chain runs to 210 residues: Outer-membrane lipoprotein LolB (210 aa).

An N-terminal signal peptide occupies residues Met1–Gly29. Residue Cys30 is the site of N-palmitoyl cysteine attachment. Cys30 carries S-diacylglycerol cysteine lipidation.

Belongs to the LolB family. As to quaternary structure, monomer.

The protein resides in the cell outer membrane. Functionally, plays a critical role in the incorporation of lipoproteins in the outer membrane after they are released by the LolA protein. The sequence is that of Outer-membrane lipoprotein LolB from Coxiella burnetii (strain CbuG_Q212) (Coxiella burnetii (strain Q212)).